A 126-amino-acid polypeptide reads, in one-letter code: Calcitonin receptor-stimulating peptide 1 (126 aa).

The signal sequence occupies residues 1–25 (MGFWKFPPFLVLSILVLYQAGMFHT). Positions 26 to 78 (APMRSAFGSPFDPATLSEEESRLLLAAMVNDYEQMKAREMQKQRAQGSGISVQ) are excised as a propeptide. Cysteine 82 and cysteine 87 are oxidised to a cystine. Residue glycine 118 is modified to Glycine amide. A propeptide spanning residues 123-126 (NFWI) is cleaved from the precursor.

As to expression, mainly expressed in the thyroid gland and CNS. Found in the nerve cells of cerebrum, hippocampus, hypothalamus, pons/midbrain and thalamus.

The protein resides in the secreted. Stimulates cAMP production in porcine kidney cell line LLC-PK1 via the calcitonin receptor (CT) but not via the CT-like (CL) receptor. In Sus scrofa (Pig), this protein is Calcitonin receptor-stimulating peptide 1 (CRSP1).